A 183-amino-acid polypeptide reads, in one-letter code: MMIRAEDAGHGEEQTLLEWLAAQPGDPSFYAFLALLIFFGLLLHMGVHRTIAKTLDDRAEGISNELDEAKRLREDAAEMLASYQRKQREAEAEAEAIIAQAKTEAKSLKAEARKEMTERLERRTAMAEQRIAQAEAQAAADVKAAAAELAAQAAEEILKTQLKKSDLNKLVDADIKTVGQRLN.

A helical membrane pass occupies residues 27 to 47; sequence PSFYAFLALLIFFGLLLHMGV.

This sequence belongs to the ATPase B chain family. F-type ATPases have 2 components, F(1) - the catalytic core - and F(0) - the membrane proton channel. F(1) has five subunits: alpha(3), beta(3), gamma(1), delta(1), epsilon(1). F(0) has three main subunits: a(1), b(2) and c(10-14). The alpha and beta chains form an alternating ring which encloses part of the gamma chain. F(1) is attached to F(0) by a central stalk formed by the gamma and epsilon chains, while a peripheral stalk is formed by the delta and b chains.

The protein resides in the cell inner membrane. In terms of biological role, f(1)F(0) ATP synthase produces ATP from ADP in the presence of a proton or sodium gradient. F-type ATPases consist of two structural domains, F(1) containing the extramembraneous catalytic core and F(0) containing the membrane proton channel, linked together by a central stalk and a peripheral stalk. During catalysis, ATP synthesis in the catalytic domain of F(1) is coupled via a rotary mechanism of the central stalk subunits to proton translocation. Functionally, component of the F(0) channel, it forms part of the peripheral stalk, linking F(1) to F(0). This is ATP synthase subunit b 2 from Maricaulis maris (strain MCS10) (Caulobacter maris).